A 390-amino-acid polypeptide reads, in one-letter code: Tryptophan synthase beta chain 2 (390 aa).

Residue K83 is modified to N6-(pyridoxal phosphate)lysine.

Belongs to the TrpB family. As to quaternary structure, tetramer of two alpha and two beta chains. Pyridoxal 5'-phosphate serves as cofactor.

It carries out the reaction (1S,2R)-1-C-(indol-3-yl)glycerol 3-phosphate + L-serine = D-glyceraldehyde 3-phosphate + L-tryptophan + H2O. The protein operates within amino-acid biosynthesis; L-tryptophan biosynthesis; L-tryptophan from chorismate: step 5/5. In terms of biological role, the beta subunit is responsible for the synthesis of L-tryptophan from indole and L-serine. This chain is Tryptophan synthase beta chain 2 (trpB2), found in Methanothermobacter marburgensis (strain ATCC BAA-927 / DSM 2133 / JCM 14651 / NBRC 100331 / OCM 82 / Marburg) (Methanobacterium thermoautotrophicum).